Reading from the N-terminus, the 318-residue chain is Basic leucine zipper (bZIP) transcription factor atfB (318 aa).

The disordered stretch occupies residues 114 to 157; the sequence is FNSSPPEYAPPKHRSSLSEQSQTDGYGVSTRRRKASAIDQCEQQ. Positions 160-199 are basic motif; it reads REKREKFLERNRLAASKCRQKKKEHTKLLETRFREVSNKK. The region spanning 160–223 is the bZIP domain; it reads REKREKFLER…LNLKNEMLRH (64 aa). The interval 202–216 is leucine-zipper; it reads LESEIEHLRSEVLNL. A disordered region spans residues 275 to 301; the sequence is DGPMQLPSEMGSPLDQRRDSEQSIMTE.

It belongs to the bZIP family. ATF subfamily.

Its subcellular location is the nucleus. Transcription factor that acts as a key player in the regulatory circuit that integrates secondary metabolism and cellular response to oxidative stress. Regulates the genes involved in development and stress response through direct binding to their promoters. This chain is Basic leucine zipper (bZIP) transcription factor atfB, found in Aspergillus flavus (strain ATCC 200026 / FGSC A1120 / IAM 13836 / NRRL 3357 / JCM 12722 / SRRC 167).